We begin with the raw amino-acid sequence, 380 residues long: Cytochrome b (380 aa).

Transmembrane regions (helical) follow at residues 34–54 (FGSL…LLAM), 78–99 (WLIR…YMHI), 114–134 (WNTG…GYVL), and 179–199 (FFAL…IHLT). Heme b contacts are provided by His84 and His98. The heme b site is built by His183 and His197. His202 contributes to the a ubiquinone binding site. 4 consecutive transmembrane segments (helical) span residues 227 to 247 (LKDI…ALFS), 289 to 309 (LGGV…PLLH), 321 to 341 (LSQL…WIGS), and 348 to 368 (FIII…ILFP).

This sequence belongs to the cytochrome b family. The cytochrome bc1 complex contains 11 subunits: 3 respiratory subunits (MT-CYB, CYC1 and UQCRFS1), 2 core proteins (UQCRC1 and UQCRC2) and 6 low-molecular weight proteins (UQCRH/QCR6, UQCRB/QCR7, UQCRQ/QCR8, UQCR10/QCR9, UQCR11/QCR10 and a cleavage product of UQCRFS1). This cytochrome bc1 complex then forms a dimer. Heme b serves as cofactor.

Its subcellular location is the mitochondrion inner membrane. Component of the ubiquinol-cytochrome c reductase complex (complex III or cytochrome b-c1 complex) that is part of the mitochondrial respiratory chain. The b-c1 complex mediates electron transfer from ubiquinol to cytochrome c. Contributes to the generation of a proton gradient across the mitochondrial membrane that is then used for ATP synthesis. In Oceanodroma furcata (Fork-tailed storm-petrel), this protein is Cytochrome b (MT-CYB).